The chain runs to 1033 residues: Isoleucine--tRNA ligase 2 (1033 aa).

Positions 47–57 (PTANGLPHVGH) match the 'HIGH' region motif. Positions 590–594 (KMSKS) match the 'KMSKS' region motif. Lysine 593 contacts ATP.

The protein belongs to the class-I aminoacyl-tRNA synthetase family. IleS type 2 subfamily. In terms of assembly, monomer. Requires Zn(2+) as cofactor.

The protein localises to the cytoplasm. The catalysed reaction is tRNA(Ile) + L-isoleucine + ATP = L-isoleucyl-tRNA(Ile) + AMP + diphosphate. Catalyzes the attachment of isoleucine to tRNA(Ile). As IleRS can inadvertently accommodate and process structurally similar amino acids such as valine, to avoid such errors it has two additional distinct tRNA(Ile)-dependent editing activities. One activity is designated as 'pretransfer' editing and involves the hydrolysis of activated Val-AMP. The other activity is designated 'posttransfer' editing and involves deacylation of mischarged Val-tRNA(Ile). This Bacillus thuringiensis subsp. konkukian (strain 97-27) protein is Isoleucine--tRNA ligase 2.